A 280-amino-acid chain; its full sequence is Keratin, type I cytoskeletal 47 kDa (280 aa).

The segment at 1–81 is head; sequence MSFRSSSSYS…SSSFSSFGGN (81 aa). The coil 1A stretch occupies residues 82–117; that stretch reads DKQTMQNLNDRLASYLEKVRALEAANADLELKIREW. One can recognise an IF rod domain in the interval 82–280; it reads DKQTMQNLND…RDAELWFNQK (199 aa). A linker 1 region spans residues 118-139; sequence YEKQKGSGIGAASKDFSKYFEI. Positions 140-231 are coil 1B; that stretch reads ISDLRNKILF…KNHEEEMSIA (92 aa). Residues 232-254 are linker 12; it reads KGSAAGQVTVEMDAAPGVDLNKI. The interval 255-280 is coil 2; that stretch reads LSDMRADYETLAEKNRRDAELWFNQK.

Belongs to the intermediate filament family. Heterotetramer of two type I and two type II keratins.

The protein is Keratin, type I cytoskeletal 47 kDa (xk81b1) of Xenopus laevis (African clawed frog).